We begin with the raw amino-acid sequence, 481 residues long: UDP-N-acetylmuramate--L-alanine ligase (481 aa).

123 to 129 serves as a coordination point for ATP; that stretch reads GTHGKTT.

The protein belongs to the MurCDEF family.

It is found in the cytoplasm. The catalysed reaction is UDP-N-acetyl-alpha-D-muramate + L-alanine + ATP = UDP-N-acetyl-alpha-D-muramoyl-L-alanine + ADP + phosphate + H(+). It participates in cell wall biogenesis; peptidoglycan biosynthesis. Cell wall formation. This chain is UDP-N-acetylmuramate--L-alanine ligase, found in Pseudomonas fluorescens (strain SBW25).